Consider the following 91-residue polypeptide: Small ribosomal subunit protein uS19 (91 aa).

It belongs to the universal ribosomal protein uS19 family.

Functionally, protein S19 forms a complex with S13 that binds strongly to the 16S ribosomal RNA. This is Small ribosomal subunit protein uS19 from Hahella chejuensis (strain KCTC 2396).